Consider the following 370-residue polypeptide: S-adenosylmethionine decarboxylase proenzyme (370 aa).

Phenylalanine 28 is a binding site for substrate. Catalysis depends on residues glutamate 29 and glutamate 32. A substrate-binding site is contributed by glutamate 85. Serine 86 functions as the Schiff-base intermediate with substrate; via pyruvic acid in the catalytic mechanism. Serine 86 bears the Pyruvic acid (Ser); by autocatalysis mark. Residue cysteine 100 is the Proton donor; for catalytic activity of the active site. Active-site proton acceptor; for processing activity residues include serine 250 and histidine 263. Glutamate 267 lines the substrate pocket.

The protein belongs to the eukaryotic AdoMetDC family. As to quaternary structure, forms a heterodimer with catalytically inactive AdoMetDC prozyme; heterodimerization is required to activate AdoMetDC. It depends on pyruvate as a cofactor. In terms of processing, is synthesized initially as an inactive proenzyme. Formation of the active enzyme involves a self-maturation process in which the active site pyruvoyl group is generated from an internal serine residue via an autocatalytic post-translational modification. Two non-identical subunits are generated from the proenzyme in this reaction, and the pyruvate is formed at the N-terminus of the alpha chain, which is derived from the carboxyl end of the proenzyme. The post-translation cleavage follows an unusual pathway, termed non-hydrolytic serinolysis, in which the side chain hydroxyl group of the serine supplies its oxygen atom to form the C-terminus of the beta chain, while the remainder of the serine residue undergoes an oxidative deamination to the alpha chain.

It catalyses the reaction S-adenosyl-L-methionine + H(+) = S-adenosyl 3-(methylsulfanyl)propylamine + CO2. Its pathway is amine and polyamine biosynthesis; S-adenosylmethioninamine biosynthesis; S-adenosylmethioninamine from S-adenosyl-L-methionine: step 1/1. Allosterically activated by AdoMetDC prozyme. Activated by putrescine. Inhibited by spermine and methylglyoxal-bis(guanylhydrazone) (MGBG) and slightly by spermidine. Inhibited by 5'-([(Z)-4-amino-2-butenyl]methylamino)-5'-deoxyadenosine (MDL 73811). In terms of biological role, probably in association with catalytically inactive AdoMetDC prozyme, catalyzes the decarboxylation of S-adenosyl-L-methionine which is essential for the biosynthesis of the polyamine spermidine. Required for growth and survival during the bloodstream life cycle stage. The polypeptide is S-adenosylmethionine decarboxylase proenzyme (Trypanosoma cruzi).